The following is a 297-amino-acid chain: Protoheme IX farnesyltransferase 1 (297 aa).

Helical transmembrane passes span 23–43 (VVVL…RAGV), 45–65 (WSVL…AAAV), 93–113 (LPAL…LLMF), 117–137 (LTAW…TGFL), 145–165 (IVIG…AVSG), 171–191 (PLLL…ALAI), 216–236 (LHIL…YAIH), 241–261 (LYLV…WVLY), and 277–297 (IGYL…LLNL).

Belongs to the UbiA prenyltransferase family. Protoheme IX farnesyltransferase subfamily.

Its subcellular location is the cell inner membrane. It carries out the reaction heme b + (2E,6E)-farnesyl diphosphate + H2O = Fe(II)-heme o + diphosphate. The protein operates within porphyrin-containing compound metabolism; heme O biosynthesis; heme O from protoheme: step 1/1. Converts heme B (protoheme IX) to heme O by substitution of the vinyl group on carbon 2 of heme B porphyrin ring with a hydroxyethyl farnesyl side group. The polypeptide is Protoheme IX farnesyltransferase 1 (Pseudomonas putida (strain W619)).